Reading from the N-terminus, the 311-residue chain is Methionyl-tRNA formyltransferase (311 aa).

112 to 115 (SLLP) serves as a coordination point for (6S)-5,6,7,8-tetrahydrofolate.

The protein belongs to the Fmt family.

It catalyses the reaction L-methionyl-tRNA(fMet) + (6R)-10-formyltetrahydrofolate = N-formyl-L-methionyl-tRNA(fMet) + (6S)-5,6,7,8-tetrahydrofolate + H(+). Attaches a formyl group to the free amino group of methionyl-tRNA(fMet). The formyl group appears to play a dual role in the initiator identity of N-formylmethionyl-tRNA by promoting its recognition by IF2 and preventing the misappropriation of this tRNA by the elongation apparatus. This Bradyrhizobium sp. (strain ORS 278) protein is Methionyl-tRNA formyltransferase.